The sequence spans 147 residues: Large ribosomal subunit protein uL15 (147 aa).

Residues 1–46 (MSIRLENLSYTPGARKEKHRKGRGHAAGKGKQAGRGQSGQKKRSTV) form a disordered region. Basic residues predominate over residues 16–28 (KEKHRKGRGHAAG).

Belongs to the universal ribosomal protein uL15 family. In terms of assembly, part of the 50S ribosomal subunit.

Its function is as follows. Binds to the 23S rRNA. This chain is Large ribosomal subunit protein uL15, found in Mesomycoplasma hyopneumoniae (strain 7448) (Mycoplasma hyopneumoniae).